The following is a 100-amino-acid chain: Small ribosomal subunit protein uS14c (100 aa).

Belongs to the universal ribosomal protein uS14 family. As to quaternary structure, part of the 30S ribosomal subunit.

It localises to the plastid. It is found in the chloroplast. Its function is as follows. Binds 16S rRNA, required for the assembly of 30S particles. The protein is Small ribosomal subunit protein uS14c of Calycanthus floridus var. glaucus (Eastern sweetshrub).